The following is a 78-amino-acid chain: Small ribosomal subunit protein bS20 (78 aa).

Residues 55-78 (KSKGLIHKNKASRDKARLASKLAK) form a disordered region.

The protein belongs to the bacterial ribosomal protein bS20 family.

Functionally, binds directly to 16S ribosomal RNA. This Streptococcus mutans serotype c (strain ATCC 700610 / UA159) protein is Small ribosomal subunit protein bS20.